We begin with the raw amino-acid sequence, 311 residues long: 4-diphosphocytidyl-2-C-methyl-D-erythritol kinase (311 aa).

The active site involves Lys16. Position 100–110 (100–110 (PIGAGLAGGSS)) interacts with ATP. Asp142 is an active-site residue.

It belongs to the GHMP kinase family. IspE subfamily.

It catalyses the reaction 4-CDP-2-C-methyl-D-erythritol + ATP = 4-CDP-2-C-methyl-D-erythritol 2-phosphate + ADP + H(+). It functions in the pathway isoprenoid biosynthesis; isopentenyl diphosphate biosynthesis via DXP pathway; isopentenyl diphosphate from 1-deoxy-D-xylulose 5-phosphate: step 3/6. Functionally, catalyzes the phosphorylation of the position 2 hydroxy group of 4-diphosphocytidyl-2C-methyl-D-erythritol. In Prochlorococcus marinus (strain MIT 9312), this protein is 4-diphosphocytidyl-2-C-methyl-D-erythritol kinase.